We begin with the raw amino-acid sequence, 454 residues long: Adenylosuccinate synthetase isozyme 1 B (454 aa).

Residues Met-1–Tyr-24 form a disordered region. Residues Gly-39 to Lys-45 and Gly-67 to Thr-69 each bind GTP. Residue Asp-40 is the Proton acceptor of the active site. Positions 40 and 67 each coordinate Mg(2+). Asp-40 provides a ligand contact to substrate. Residues Asp-40–Lys-43, Asn-65–His-68, Thr-160, Arg-174, Asn-253, Thr-268, and Arg-332 contribute to the IMP site. His-68 acts as the Proton donor in catalysis. Residue Val-328–Arg-334 coordinates substrate. GTP contacts are provided by residues Arg-334, Lys-360 to Asp-362, and Gly-442 to Lys-445.

The protein belongs to the adenylosuccinate synthetase family. As to quaternary structure, homodimer. Mg(2+) serves as cofactor.

The protein resides in the cytoplasm. It carries out the reaction IMP + L-aspartate + GTP = N(6)-(1,2-dicarboxyethyl)-AMP + GDP + phosphate + 2 H(+). It functions in the pathway purine metabolism; AMP biosynthesis via de novo pathway; AMP from IMP: step 1/2. Functionally, component of the purine nucleotide cycle (PNC), which interconverts IMP and AMP to regulate the nucleotide levels in various tissues, and which contributes to glycolysis and ammoniagenesis. Catalyzes the first committed step in the biosynthesis of AMP from IMP. The sequence is that of Adenylosuccinate synthetase isozyme 1 B (adss1-b) from Xenopus laevis (African clawed frog).